The sequence spans 324 residues: MARRGKKKGRPISGWVIFDKPKGMGSTEAVSKIKWLFNAEKAGHAGTLDPLASGMLPIALGEATKTVPYVMDGTKIYRFTVSWGEERSTDDLEGVATKTSDNRPSRADVEALLPNYTGVISQVPPQFSAIKIDGERAYDLAREGETVEIPSREVEIDRLEIVGIPDADRTEFEVECSKGTYVRSLARDMGRDLGCYGHISELRRIEVAPFTEEDAVTLAELEQAWPPLPPKDEDGNVVEPTPRRDFSAIDALVIDTGAALDCLPQVPLTDDQAQRVRLGNPVILRGRDAPLEADEACVTTRGKLLAIGYIEHGQFKPKRVFTTG.

The Nucleophile role is filled by aspartate 49.

Belongs to the pseudouridine synthase TruB family. Type 1 subfamily.

The catalysed reaction is uridine(55) in tRNA = pseudouridine(55) in tRNA. In terms of biological role, responsible for synthesis of pseudouridine from uracil-55 in the psi GC loop of transfer RNAs. In Brucella anthropi (strain ATCC 49188 / DSM 6882 / CCUG 24695 / JCM 21032 / LMG 3331 / NBRC 15819 / NCTC 12168 / Alc 37) (Ochrobactrum anthropi), this protein is tRNA pseudouridine synthase B.